The sequence spans 366 residues: Quinolinate synthase (366 aa).

Iminosuccinate contacts are provided by His-44 and Ser-61. Cys-108 contacts [4Fe-4S] cluster. Iminosuccinate is bound by residues 139–141 and Ser-160; that span reads YIN. [4Fe-4S] cluster is bound at residue Cys-228. Iminosuccinate contacts are provided by residues 254 to 256 and Thr-271; that span reads HPE. A [4Fe-4S] cluster-binding site is contributed by Cys-318.

The protein belongs to the quinolinate synthase family. Type 3 subfamily. It depends on [4Fe-4S] cluster as a cofactor.

It localises to the cytoplasm. It carries out the reaction iminosuccinate + dihydroxyacetone phosphate = quinolinate + phosphate + 2 H2O + H(+). It participates in cofactor biosynthesis; NAD(+) biosynthesis; quinolinate from iminoaspartate: step 1/1. Catalyzes the condensation of iminoaspartate with dihydroxyacetone phosphate to form quinolinate. This is Quinolinate synthase from Listeria monocytogenes serotype 4b (strain F2365).